Consider the following 711-residue polypeptide: MEALLEGMQRNGQGSSGFLTSCEAELQELMKQIDIMVAHKKAEWEGQTQALEACLGVREQELSSARAALEEKHKEVGKLRQQLEDMEAAKQDLVREYEQQLKKFQEELARLRRSYEKLQKKQLREAREEATKRQGDDQCEMSRLSRKLEEFRQKSLDWEKQRLLYQQQVASLEAQRKALAEQSELIQTQLASRKQILESVELASRSEIQHLTSKLERANDTICANELEVERLNMRVDDLTENNRMILEDQQRVAEELRQSKKMLEVLQDEKMELRATLQSQEDFIDSSKLHQEQLQKELARVTETLHTKEILIRALEERLQEKQLSSPGLEHILLQLDVAQEKEQHLQAEVTHLEDSLVSSNARCVQLSEELAESIKELQSMEEHRAESKVEIKKLKEQLSQAEQIHRGELEGMRKEILRLTQELHQRDITIASAGGSTSDLEQRLRMEIERAERKAVEHRMILVQLETLKLENRHLSEMLEKVELGVLEGKDATLRALSEDYVVELNKLKSENQQLKKDLSEAREKLELTTQSQPEGTAQQLQSEEPEPRDVQHRPTQESQHKQDEQTEKIHHKPDKTTQHHQRWKIQPLPAEIPVAVIPEASVLPTQTSRKSCVESPTLAAGALQGTDSLLLVLDDSKGFPDATSRQSNHEQESVPLCPLPTSSVGSVAARYLEEEELRSQHILECLDAHIEELKKESEKIVRHFGHQE.

2 coiled-coil regions span residues 23–192 (EAEL…QLAS) and 224–535 (ANEL…TQSQ). A disordered region spans residues 529 to 585 (ELTTQSQPEGTAQQLQSEEPEPRDVQHRPTQESQHKQDEQTEKIHHKPDKTTQHHQR). The segment covering 530–545 (LTTQSQPEGTAQQLQS) has biased composition (polar residues). Positions 548-571 (PEPRDVQHRPTQESQHKQDEQTEK) are enriched in basic and acidic residues. A compositionally biased stretch (basic residues) spans 572–585 (IHHKPDKTTQHHQR).

This sequence belongs to the CEP63 family.

Its subcellular location is the cytoplasm. It is found in the cytoskeleton. It localises to the microtubule organizing center. The protein resides in the centrosome. The protein localises to the centriole. Functionally, required for normal spindle assembly. Plays a key role in mother-centriole-dependent centriole duplication. Plays a role in DNA damage response. Following DNA damage, such as double-strand breaks (DSBs), is removed from centrosomes; this leads to the inactivation of spindle assembly and delay in mitotic progression. The polypeptide is Centrosomal protein of 63 kDa (CEP63) (Gallus gallus (Chicken)).